Here is a 656-residue protein sequence, read N- to C-terminus: MIKDYNDYKKAVDTLKKWAYYYYVLDNPLVTDEEYDKLYHEVEEYEKKHPDKIDPTSPTQRVGDVVLEGFEKAKHLSRMWSMEDVFNEKDFLDWVGRVKRILGHENFSFYIEPKFDGASLNLIYENGKLIRAETRGDGEIGEDVTLNAKTINSIPLEIKEKSLIEIRGEVVIKKDDFDKLNEERLKNGEPTFANPRNAAAGSLRQLDPKITAKRPLIFYPWGVGVNSLNYERYSELMDYIYSLGFKEPPKRGVCKDIPCVEKKYDEFVKLRDSFEVMLDGMVVKIDEIKYHDILGYTQKYPRWMVAYKFPAIEKETIIEDVIVQVGRTGVLTPVAVLKPVEIGGVIVERATLHNFDEIERMDIRIGDHVIVIRSGDVIPKITKVLTWKRKGDEKPIPRPTHCPVCGAEVLDEGALIKCQNLSCPARVVNTIIYFASKNCLDIEGLGESVAKLLYEHGLVKDVTDLFELKVEDLEKLPLFARKKAENLVNAIKSKVGVECWRFVNALGIEHIGEVASKKICEKFGVEFYKHAPEEFEEIEGFGPEMVKSIAEYIRVNKEKIEKLIEILKPKNPEKKEVQKTPFTGKTVVLTGTMSKPRSEIKKMLEDMGAKVSSSVSKKTDFVIYGEDAGSKYDKAKKLGVNLLSEDDMWKMLKEGK.

NAD(+) contacts are provided by residues D32 to D36, S81 to M82, and E112. K114 (N6-AMP-lysine intermediate) is an active-site residue. NAD(+) contacts are provided by R135, E169, K284, and K308. Residues C402, C405, C418, and C423 each contribute to the Zn(2+) site. The BRCT domain occupies V577–K656.

Belongs to the NAD-dependent DNA ligase family. LigA subfamily. Mg(2+) is required as a cofactor. Requires Mn(2+) as cofactor.

The catalysed reaction is NAD(+) + (deoxyribonucleotide)n-3'-hydroxyl + 5'-phospho-(deoxyribonucleotide)m = (deoxyribonucleotide)n+m + AMP + beta-nicotinamide D-nucleotide.. In terms of biological role, DNA ligase that catalyzes the formation of phosphodiester linkages between 5'-phosphoryl and 3'-hydroxyl groups in double-stranded DNA using NAD as a coenzyme and as the energy source for the reaction. It is essential for DNA replication and repair of damaged DNA. This chain is DNA ligase, found in Nautilia profundicola (strain ATCC BAA-1463 / DSM 18972 / AmH).